A 288-amino-acid chain; its full sequence is 33 kDa chaperonin (288 aa).

Disulfide bonds link Cys235–Cys237 and Cys268–Cys271.

It belongs to the HSP33 family. Under oxidizing conditions two disulfide bonds are formed involving the reactive cysteines. Under reducing conditions zinc is bound to the reactive cysteines and the protein is inactive.

The protein localises to the cytoplasm. Redox regulated molecular chaperone. Protects both thermally unfolding and oxidatively damaged proteins from irreversible aggregation. Plays an important role in the bacterial defense system toward oxidative stress. The protein is 33 kDa chaperonin of Streptococcus thermophilus (strain ATCC BAA-250 / LMG 18311).